Reading from the N-terminus, the 199-residue chain is SCO2-like protein RBE_0029 (199 aa).

This sequence belongs to the SCO1/2 family.

This is SCO2-like protein RBE_0029 from Rickettsia bellii (strain RML369-C).